Reading from the N-terminus, the 1524-residue chain is DNA-directed RNA polymerase subunit beta' (1524 aa).

Positions 58, 60, 73, and 76 each coordinate Zn(2+). Residues D739, D741, and D743 each coordinate Mg(2+). Positions 1112, 1194, 1201, and 1204 each coordinate Zn(2+). A disordered region spans residues 1501 to 1524 (EAVEAKERPAARRGVKREQPGKQA).

The protein belongs to the RNA polymerase beta' chain family. The RNAP catalytic core consists of 2 alpha, 1 beta, 1 beta' and 1 omega subunit. When a sigma factor is associated with the core the holoenzyme is formed, which can initiate transcription. Mg(2+) serves as cofactor. It depends on Zn(2+) as a cofactor.

The catalysed reaction is RNA(n) + a ribonucleoside 5'-triphosphate = RNA(n+1) + diphosphate. Its function is as follows. DNA-dependent RNA polymerase catalyzes the transcription of DNA into RNA using the four ribonucleoside triphosphates as substrates. The protein is DNA-directed RNA polymerase subunit beta' of Thermus thermophilus (strain ATCC BAA-163 / DSM 7039 / HB27).